Here is a 313-residue protein sequence, read N- to C-terminus: Proline iminopeptidase (313 aa).

One can recognise an AB hydrolase-1 domain in the interval 35 to 298 (KPVVILHGGP…TPGAGHSAFE (264 aa)). The active-site Nucleophile is Ser110. Asp266 is a catalytic residue. His294 acts as the Proton donor in catalysis.

It belongs to the peptidase S33 family.

It localises to the cytoplasm. The catalysed reaction is Release of N-terminal proline from a peptide.. In terms of biological role, specifically catalyzes the removal of N-terminal proline residues from peptides. The polypeptide is Proline iminopeptidase (pip) (Xylella fastidiosa (strain 9a5c)).